A 510-amino-acid chain; its full sequence is Aromatic-L-amino-acid decarboxylase (510 aa).

Polar residues predominate over residues 1-17; that stretch reads MSHIPISNTIPPKQTDG. The segment at 1–29 is disordered; that stretch reads MSHIPISNTIPPKQTDGNGKANISPDKLD. Residue Thr117 coordinates substrate. The pyridoxal 5'-phosphate site is built by Ala183, Ser184, His227, Asp305, and Asn334. Substrate is bound at residue His227. Lys337 bears the N6-(pyridoxal phosphate)lysine mark. The disordered stretch occupies residues 358-384; that stretch reads NAFNVDPLYLKHDMQGSAPDYRHWQIP.

This sequence belongs to the group II decarboxylase family. In terms of assembly, homodimer. It depends on pyridoxal 5'-phosphate as a cofactor.

It catalyses the reaction L-dopa + H(+) = dopamine + CO2. It carries out the reaction 5-hydroxy-L-tryptophan + H(+) = serotonin + CO2. Catalyzes the decarboxylation of L-3,4-dihydroxyphenylalanine (L-DOPA) to dopamine and L-5-hydroxytryptophan (5-HTP) to serotonin. Catalyzes the formation of serotonin more efficiently than dopamine. Displays no activity to tyrosine. Variation in the synthesis of bioamines may be a factor contributing to natural variation in life span. The chain is Aromatic-L-amino-acid decarboxylase (Ddc) from Drosophila simulans (Fruit fly).